We begin with the raw amino-acid sequence, 450 residues long: UDP-N-acetylmuramoylalanine--D-glutamate ligase (450 aa).

Position 115–121 (115–121 (GTNGKTT)) interacts with ATP.

Belongs to the MurCDEF family.

Its subcellular location is the cytoplasm. It carries out the reaction UDP-N-acetyl-alpha-D-muramoyl-L-alanine + D-glutamate + ATP = UDP-N-acetyl-alpha-D-muramoyl-L-alanyl-D-glutamate + ADP + phosphate + H(+). It participates in cell wall biogenesis; peptidoglycan biosynthesis. Cell wall formation. Catalyzes the addition of glutamate to the nucleotide precursor UDP-N-acetylmuramoyl-L-alanine (UMA). The chain is UDP-N-acetylmuramoylalanine--D-glutamate ligase from Lachnospira eligens (strain ATCC 27750 / DSM 3376 / VPI C15-48 / C15-B4) (Eubacterium eligens).